The primary structure comprises 312 residues: Glyoxylate/hydroxypyruvate reductase A (312 aa).

Residue R227 is part of the active site. The active-site Proton donor is H275.

Belongs to the D-isomer specific 2-hydroxyacid dehydrogenase family. GhrA subfamily.

The protein resides in the cytoplasm. It catalyses the reaction glycolate + NADP(+) = glyoxylate + NADPH + H(+). The catalysed reaction is (R)-glycerate + NAD(+) = 3-hydroxypyruvate + NADH + H(+). The enzyme catalyses (R)-glycerate + NADP(+) = 3-hydroxypyruvate + NADPH + H(+). Its function is as follows. Catalyzes the NADPH-dependent reduction of glyoxylate and hydroxypyruvate into glycolate and glycerate, respectively. The protein is Glyoxylate/hydroxypyruvate reductase A of Salmonella paratyphi B (strain ATCC BAA-1250 / SPB7).